Here is a 281-residue protein sequence, read N- to C-terminus: 2,3,4,5-tetrahydropyridine-2,6-dicarboxylate N-succinyltransferase (281 aa).

2 residues coordinate substrate: arginine 108 and aspartate 145.

It belongs to the transferase hexapeptide repeat family. Homotrimer.

It localises to the cytoplasm. The catalysed reaction is (S)-2,3,4,5-tetrahydrodipicolinate + succinyl-CoA + H2O = (S)-2-succinylamino-6-oxoheptanedioate + CoA. It participates in amino-acid biosynthesis; L-lysine biosynthesis via DAP pathway; LL-2,6-diaminopimelate from (S)-tetrahydrodipicolinate (succinylase route): step 1/3. The sequence is that of 2,3,4,5-tetrahydropyridine-2,6-dicarboxylate N-succinyltransferase from Rhodopseudomonas palustris (strain ATCC BAA-98 / CGA009).